A 186-amino-acid chain; its full sequence is NADH-quinone oxidoreductase subunit B (186 aa).

Positions 44, 45, 110, and 139 each coordinate [4Fe-4S] cluster.

It belongs to the complex I 20 kDa subunit family. In terms of assembly, NDH-1 is composed of 14 different subunits. Subunits NuoB, C, D, E, F, and G constitute the peripheral sector of the complex. The cofactor is [4Fe-4S] cluster.

Its subcellular location is the cell inner membrane. The catalysed reaction is a quinone + NADH + 5 H(+)(in) = a quinol + NAD(+) + 4 H(+)(out). Functionally, NDH-1 shuttles electrons from NADH, via FMN and iron-sulfur (Fe-S) centers, to quinones in the respiratory chain. The immediate electron acceptor for the enzyme in this species is believed to be ubiquinone. Couples the redox reaction to proton translocation (for every two electrons transferred, four hydrogen ions are translocated across the cytoplasmic membrane), and thus conserves the redox energy in a proton gradient. In Leptospira interrogans serogroup Icterohaemorrhagiae serovar copenhageni (strain Fiocruz L1-130), this protein is NADH-quinone oxidoreductase subunit B.